A 219-amino-acid polypeptide reads, in one-letter code: UPF0502 protein Gura_0277 (219 aa).

This sequence belongs to the UPF0502 family.

The polypeptide is UPF0502 protein Gura_0277 (Geotalea uraniireducens (strain Rf4) (Geobacter uraniireducens)).